A 522-amino-acid chain; its full sequence is Glucans biosynthesis protein G (522 aa).

An N-terminal signal peptide occupies residues 1-33; sequence MPNNKFFVKSSKASLRWLGATVLLTLYALPSWA.

The protein belongs to the OpgD/OpgG family.

It localises to the periplasm. Its pathway is glycan metabolism; osmoregulated periplasmic glucan (OPG) biosynthesis. Its function is as follows. Involved in the biosynthesis of osmoregulated periplasmic glucans (OPGs). This Sodalis glossinidius (strain morsitans) protein is Glucans biosynthesis protein G.